We begin with the raw amino-acid sequence, 402 residues long: MKRLWQHCHAATLKGGKYSIVEDAALVTDGPLIHWIGPRAELPPGDYAERIDLGGAWLTPGLIDCHTHAVFGGNRSGEFEQRLEGVSYAEIAAAGGGIASTVRATREASEEELLASARKRLEPLLRDGVTALEIKSGYGLDLASERKMLRVIRRLGERLPATVRSTCLAAHALPPEYAGRADDYIEHICSTMLPALAGEGLVDAVDAFCEHLAFSPAQVERVFIAARELGLPVKLHAEQLSSLHGSSLAARYRALSADHLEYMTEDDARAMGEAGTVAVLLPGAFYLLRETQLPPIDALRRHGVAMAIASDLNPGTSPALSLRLMLNMACTLFRLTPEETLAGVTLHAARALGLEASHGSLEVGKLADFVAWDIERPAELAYWLGGDLPKRVIRHAEEVYRG.

2 residues coordinate Fe(3+): histidine 66 and histidine 68. The Zn(2+) site is built by histidine 66 and histidine 68. 4-imidazolone-5-propanoate-binding residues include arginine 75, tyrosine 138, and histidine 171. Tyrosine 138 contacts N-formimidoyl-L-glutamate. Histidine 236 is a Fe(3+) binding site. Histidine 236 serves as a coordination point for Zn(2+). Glutamine 239 provides a ligand contact to 4-imidazolone-5-propanoate. Aspartate 311 is a binding site for Fe(3+). Aspartate 311 is a binding site for Zn(2+). The N-formimidoyl-L-glutamate site is built by asparagine 313 and glycine 315. Residue threonine 316 coordinates 4-imidazolone-5-propanoate.

Belongs to the metallo-dependent hydrolases superfamily. HutI family. Zn(2+) serves as cofactor. Fe(3+) is required as a cofactor.

It is found in the cytoplasm. It catalyses the reaction 4-imidazolone-5-propanoate + H2O = N-formimidoyl-L-glutamate. It participates in amino-acid degradation; L-histidine degradation into L-glutamate; N-formimidoyl-L-glutamate from L-histidine: step 3/3. In terms of biological role, catalyzes the hydrolytic cleavage of the carbon-nitrogen bond in imidazolone-5-propanoate to yield N-formimidoyl-L-glutamate. It is the third step in the universal histidine degradation pathway. This Pseudomonas aeruginosa (strain ATCC 15692 / DSM 22644 / CIP 104116 / JCM 14847 / LMG 12228 / 1C / PRS 101 / PAO1) protein is Imidazolonepropionase.